The chain runs to 498 residues: Aldehyde dehydrogenase, mitochondrial (498 aa).

The N-terminal 9 residues, 1 to 9 (MLRATLARL), are a transit peptide targeting the mitochondrion. NAD(+) is bound at residue 242–247 (GSTAVG). The active-site Proton acceptor is the glutamate 265. Cysteine 299 acts as the Nucleophile in catalysis.

Belongs to the aldehyde dehydrogenase family.

It is found in the mitochondrion. The catalysed reaction is an aldehyde + NAD(+) + H2O = a carboxylate + NADH + 2 H(+). It functions in the pathway alcohol metabolism; ethanol degradation; acetate from ethanol: step 2/2. Could have an RNA-binding activity in addition of its catalytic role. The protein is Aldehyde dehydrogenase, mitochondrial (ALDH2) of Leishmania tarentolae (Sauroleishmania tarentolae).